We begin with the raw amino-acid sequence, 393 residues long: MPKKKPTPIQLNPAPDGSAVNGTSSAETNLEALQKKLEELELDEQQRKRLEAFLTQKQKVGELKDDDFEKISELGAGNGGVVFKVSHKPSGLVMARKLIHLEIKPAIRNQIIRELQVLHECNSPYIVGFYGAFYSDGEISICMEHMDGGSLDQVLKKAGRIPEQILGKVSIAVIKGLTYLREKHKIMHRDVQPSNILVNSRGEIKLCDFGVSGQLIDSMANSFVGTRSYMSPERFQGTHYSVQSDIWSMGLSPVEMAVGRYPIPSPDAKELELMFGCQVEGDAAETPPRPRTPGRPLSSYGMDSRPPMAIFELLDYIVNEPPPKLPSGVFSLEFQDFVNKCLIKNPAERADLKQLMVHAFIKRSDAEEVDFAGWLCSTIGLNQPSTPTHAAGV.

A disordered region spans residues 1–27; it reads MPKKKPTPIQLNPAPDGSAVNGTSSAE. Residues 68–361 form the Protein kinase domain; that stretch reads FEKISELGAG…LKQLMVHAFI (294 aa). Residues 74-82 and Lys-97 contribute to the ATP site; that span reads LGAGNGGVV. Asp-190 serves as the catalytic Proton acceptor. Residues Ser-218 and Ser-222 each carry the phosphoserine; by RAF modification. The segment at 270–307 is RAF1-binding; it reads ELELMFGCQVEGDAAETPPRPRTPGRPLSSYGMDSRPP. Position 286 is a phosphothreonine (Thr-286). Thr-292 carries the phosphothreonine; by MAPK1 modification. Residue Ser-298 is modified to Phosphoserine; by PAK.

Belongs to the protein kinase superfamily. STE Ser/Thr protein kinase family. MAP kinase kinase subfamily. As to quaternary structure, found in a complex with at least BRAF, HRAS, MAP2K1, MAPK3/ERK1 and RGS14. Forms a heterodimer with MAP2K2/MEK2. Forms heterodimers with KSR2 which further dimerize to form tetramers. Interacts with KSR1 or KSR2 and BRAF; the interaction with KSR1 or KSR2 mediates KSR1-BRAF or KSR2-BRAF dimerization. Interacts with ARBB2, LAMTOR3, MAPK1/ERK2 and RAF1. Interacts with MAPK1/ERK2. Interacts with MORG1. Interacts with PPARG. Interacts with isoform 1 of VRK2. Interacts with SGK1. Interacts with BIRC6/bruce. Interacts with KAT7; the interaction promotes KAT7 phosphorylation. Interacts with RAF1 and NEK10; the interaction is required for ERK1/2-signaling pathway activation in response to UV irradiation. Interacts with TRAF3IP3. Interacts with MOS. Post-translationally, phosphorylation at Ser-218 and Ser-222 by MAP kinase kinase kinases (BRAF or MEKK1) positively regulates the kinase activity. Also phosphorylated at Thr-292 by MAPK1/ERK2 and at Ser-298 by PAK. MAPK1/ERK2 phosphorylation of Thr-292 occurs in response to cellular adhesion and leads to inhibition of Ser-298 phosphorylation by PAK. Autophosphorylated at Ser-218 and Ser-222, autophosphosphorylation is promoted by NEK10 following UV irradiation.

The protein resides in the cytoplasm. The protein localises to the cytoskeleton. Its subcellular location is the microtubule organizing center. It localises to the centrosome. It is found in the spindle pole body. The protein resides in the nucleus. The protein localises to the membrane. It carries out the reaction L-seryl-[protein] + ATP = O-phospho-L-seryl-[protein] + ADP + H(+). The enzyme catalyses L-threonyl-[protein] + ATP = O-phospho-L-threonyl-[protein] + ADP + H(+). The catalysed reaction is L-tyrosyl-[protein] + ATP = O-phospho-L-tyrosyl-[protein] + ADP + H(+). Ras proteins such as HRAS mediate the activation of RAF proteins such as RAF1 or BRAF which in turn activate extracellular signal-regulated kinases (ERK) through MAPK (mitogen-activated protein kinases) and ERK kinases MAP2K1/MEK1 and MAP2K2/MEK2. Activation occurs through phosphorylation of Ser-218 and Ser-222. MAP2K1/MEK1 binds KSR1 or KSR2 releasing the inhibitory intramolecular interaction between KSR1 or KSR2 protein kinase and N-terminal domains. This allows KSR1 or KSR2 dimerization with BRAF leading to BRAF activation and phosphorylation of MAP2K1. MAP2K1/MEK1 is also the target of negative feed-back regulation by its substrate kinases, such as MAPK1/ERK2. These phosphorylate MAP2K1/MEK1 on Thr-292, thereby facilitating dephosphorylation of the activating residues Ser-218 and Ser-222. Inhibited by serine/threonine phosphatase 2A. Its function is as follows. Dual specificity protein kinase which acts as an essential component of the MAP kinase signal transduction pathway. Binding of extracellular ligands such as growth factors, cytokines and hormones to their cell-surface receptors activates RAS and this initiates RAF1 activation. RAF1 then further activates the dual-specificity protein kinases MAP2K1/MEK1 and MAP2K2/MEK2. Both MAP2K1/MEK1 and MAP2K2/MEK2 function specifically in the MAPK/ERK cascade, and catalyze the concomitant phosphorylation of a threonine and a tyrosine residue in a Thr-Glu-Tyr sequence located in the extracellular signal-regulated kinases MAPK3/ERK1 and MAPK1/ERK2, leading to their activation and further transduction of the signal within the MAPK/ERK cascade. Activates BRAF in a KSR1 or KSR2-dependent manner; by binding to KSR1 or KSR2 releases the inhibitory intramolecular interaction between KSR1 or KSR2 protein kinase and N-terminal domains which promotes KSR1 or KSR2-BRAF dimerization and BRAF activation. Depending on the cellular context, this pathway mediates diverse biological functions such as cell growth, adhesion, survival and differentiation, predominantly through the regulation of transcription, metabolism and cytoskeletal rearrangements. One target of the MAPK/ERK cascade is peroxisome proliferator-activated receptor gamma (PPARG), a nuclear receptor that promotes differentiation and apoptosis. MAP2K1/MEK1 has been shown to export PPARG from the nucleus. The MAPK/ERK cascade is also involved in the regulation of endosomal dynamics, including lysosome processing and endosome cycling through the perinuclear recycling compartment (PNRC), as well as in the fragmentation of the Golgi apparatus during mitosis. The polypeptide is Dual specificity mitogen-activated protein kinase kinase 1 (MAP2K1) (Pan troglodytes (Chimpanzee)).